Consider the following 524-residue polypeptide: Bifunctional purine biosynthesis protein PurH (524 aa).

The 144-residue stretch at 1–144 folds into the MGS-like domain; sequence MTRRALVSVS…KNSAHVGVVV (144 aa).

Belongs to the PurH family.

The enzyme catalyses (6R)-10-formyltetrahydrofolate + 5-amino-1-(5-phospho-beta-D-ribosyl)imidazole-4-carboxamide = 5-formamido-1-(5-phospho-D-ribosyl)imidazole-4-carboxamide + (6S)-5,6,7,8-tetrahydrofolate. It catalyses the reaction IMP + H2O = 5-formamido-1-(5-phospho-D-ribosyl)imidazole-4-carboxamide. It participates in purine metabolism; IMP biosynthesis via de novo pathway; 5-formamido-1-(5-phospho-D-ribosyl)imidazole-4-carboxamide from 5-amino-1-(5-phospho-D-ribosyl)imidazole-4-carboxamide (10-formyl THF route): step 1/1. The protein operates within purine metabolism; IMP biosynthesis via de novo pathway; IMP from 5-formamido-1-(5-phospho-D-ribosyl)imidazole-4-carboxamide: step 1/1. This is Bifunctional purine biosynthesis protein PurH from Anaeromyxobacter dehalogenans (strain 2CP-1 / ATCC BAA-258).